A 120-amino-acid chain; its full sequence is MFALSGYEYLLGFLLLCSLVPALALSASKVLRPSNQGAVRRTTYESGMEPVGGAWIQFNIRYYMFALVFVIFDVETVFLYPWAVAFHKLGVLAFIEALIFIAILIVGLVYAWRKGALEWS.

A run of 3 helical transmembrane segments spans residues 10–32 (LLGF…KVLR), 64–84 (MFAL…PWAV), and 89–109 (LGVL…VGLV).

It belongs to the complex I subunit 3 family. As to quaternary structure, NDH-1 can be composed of about 15 different subunits; different subcomplexes with different compositions have been identified which probably have different functions.

It is found in the cellular thylakoid membrane. It carries out the reaction a plastoquinone + NADH + (n+1) H(+)(in) = a plastoquinol + NAD(+) + n H(+)(out). It catalyses the reaction a plastoquinone + NADPH + (n+1) H(+)(in) = a plastoquinol + NADP(+) + n H(+)(out). Functionally, NDH-1 shuttles electrons from an unknown electron donor, via FMN and iron-sulfur (Fe-S) centers, to quinones in the respiratory and/or the photosynthetic chain. The immediate electron acceptor for the enzyme in this species is believed to be plastoquinone. Couples the redox reaction to proton translocation, and thus conserves the redox energy in a proton gradient. Cyanobacterial NDH-1 also plays a role in inorganic carbon-concentration. This Acaryochloris marina (strain MBIC 11017) protein is NAD(P)H-quinone oxidoreductase subunit 3.